Reading from the N-terminus, the 578-residue chain is MGQKGHKDSLYDCKGSPVSSLHEALDQCMTALDLFLTNQFSEALSYLKPRTKESMYHSLTYATILEMQAMMTFDPQDILLAGNMMKEAQSLCQRHRRKSSMTDSFSNLVHRPTIDQFTEEEIHAEVCYAECLLQRAALTFLQDENMVSFIKGGIKVRNSYQTYKELDSLVQSSQYSKGESHRHFEGGVKLGVGAFNLTLSMLPTRILRLLEFVGFSGNKDYGLLQLEEGATGHSFRAVLCVMLLLCYHTFLTFVLGTGNVNIEEAEKLLKPYLNRYPKGAIFLFFAGRIEAIKGNIDAAVRRFEECCEAQQHWKQFHHMCYWELMWCFTYKGQWKMAYFYADLLSKENSWSKATYIYMKAAYLSMFGKEDYKPFGDNEVELFRAVPGLKLKIAGKSLPTEKFAIRKSRRYLSPNPISLPIPALEMMYIWNGYAVIGKQPTLTDGMLEVITKAEEMLAMGPENEYSADDDCLVKLLKGLCLKYLGRIQEAEENFRSISANEKKIKYDHYLIPNALLELALLFMEQGRNEEAIKLLESAKQNYKNYSMESRTHFRIQAATLQARSSLEDGNRSLVSSVSL.

3 TPR repeats span residues 280 to 313 (AIFL…QQHW), 470 to 503 (CLVK…EKKI), and 511 to 544 (PNAL…YKNY).

The protein belongs to the TTC39 family.

The chain is Tetratricopeptide repeat protein 39A (Ttc39a) from Mus musculus (Mouse).